A 327-amino-acid chain; its full sequence is Undecaprenyl-phosphate 4-deoxy-4-formamido-L-arabinose transferase (327 aa).

At 1–235 (MFDAAPIKKV…TCLTTTPLRL (235 aa)) the chain is on the cytoplasmic side. Residues 236–256 (LSLLGSVIAIGGFSLSVLLIV) form a helical membrane-spanning segment. At 257 to 269 (LRLALGPQWAAEG) the chain is on the periplasmic side. Residues 270–290 (VFMLFAVLFTFIGAQFIGMGL) traverse the membrane as a helical segment. Residues 291–327 (LGEYIGRIYNDVRARPRYFVQQVIYPESTSFTEESHQ) lie on the Cytoplasmic side of the membrane.

The protein belongs to the glycosyltransferase 2 family.

It is found in the cell inner membrane. It carries out the reaction UDP-4-deoxy-4-formamido-beta-L-arabinose + di-trans,octa-cis-undecaprenyl phosphate = 4-deoxy-4-formamido-alpha-L-arabinopyranosyl di-trans,octa-cis-undecaprenyl phosphate + UDP. The protein operates within glycolipid biosynthesis; 4-amino-4-deoxy-alpha-L-arabinose undecaprenyl phosphate biosynthesis; 4-amino-4-deoxy-alpha-L-arabinose undecaprenyl phosphate from UDP-4-deoxy-4-formamido-beta-L-arabinose and undecaprenyl phosphate: step 1/2. It participates in bacterial outer membrane biogenesis; lipopolysaccharide biosynthesis. Catalyzes the transfer of 4-deoxy-4-formamido-L-arabinose from UDP to undecaprenyl phosphate. The modified arabinose is attached to lipid A and is required for resistance to polymyxin and cationic antimicrobial peptides. The protein is Undecaprenyl-phosphate 4-deoxy-4-formamido-L-arabinose transferase of Salmonella paratyphi A (strain ATCC 9150 / SARB42).